Consider the following 196-residue polypeptide: Adenosylcobinamide-phosphate guanylyltransferase (196 aa).

In terms of assembly, homodimer.

It carries out the reaction adenosylcob(III)inamide phosphate + GTP + H(+) = adenosylcob(III)inamide-GDP + diphosphate. Its pathway is cofactor biosynthesis; adenosylcobalamin biosynthesis. In terms of biological role, guanylyltransferase that catalyzes the synthesis of adenosylcobinamide-GDP (AdoCbi-GDP) from adenosylcobinamide-phosphate (AdoCbi-P) and GTP. Is involved in adenosylcobalamin biosynthesis. Binds one GTP per dimer. Cannot use other NTPs or GDP. Does not display AdoCbi kinase activity. Is also able to catalyze the condensation of 2-phospho-L-lactate (LP) with GTP in vitro to form PPi and (2S)-lactyl-2-diphospho-5'-guanosine (LPPG), but is much less efficient than CofC, the presumed enzyme catalyzing this reaction in vivo. The sequence is that of Adenosylcobinamide-phosphate guanylyltransferase (cobY) from Methanocaldococcus jannaschii (strain ATCC 43067 / DSM 2661 / JAL-1 / JCM 10045 / NBRC 100440) (Methanococcus jannaschii).